A 146-amino-acid polypeptide reads, in one-letter code: Deoxyuridine 5'-triphosphate nucleotidohydrolase (146 aa).

Substrate-binding positions include 60-62 (RSG), Asn-73, and 77-79 (VID).

This sequence belongs to the dUTPase family. It depends on Mg(2+) as a cofactor.

It carries out the reaction dUTP + H2O = dUMP + diphosphate + H(+). Its pathway is pyrimidine metabolism; dUMP biosynthesis; dUMP from dCTP (dUTP route): step 2/2. Functionally, this enzyme is involved in nucleotide metabolism: it produces dUMP, the immediate precursor of thymidine nucleotides and it decreases the intracellular concentration of dUTP so that uracil cannot be incorporated into DNA. This chain is Deoxyuridine 5'-triphosphate nucleotidohydrolase, found in Tropheryma whipplei (strain TW08/27) (Whipple's bacillus).